Here is a 228-residue protein sequence, read N- to C-terminus: Thymidylate kinase (228 aa).

An ATP-binding site is contributed by 20 to 27; it reads GGEGSGKS.

The protein belongs to the thymidylate kinase family.

The enzyme catalyses dTMP + ATP = dTDP + ADP. Functionally, phosphorylation of dTMP to form dTDP in both de novo and salvage pathways of dTTP synthesis. The polypeptide is Thymidylate kinase (Afipia carboxidovorans (strain ATCC 49405 / DSM 1227 / KCTC 32145 / OM5) (Oligotropha carboxidovorans)).